The primary structure comprises 299 residues: MLFQRRLHFHQFFGKTRVTGSLSRQWYSKLPSKLADIKKLRSETNASMDLVKQSVEEAGVGNLELAREILKKKIVQRGGKLAEKSKNRTAKEGWIIQCISEDGRKAVMAEINCESDFVAQTTPFQDLARRIASTFLHYLPTNHSSYSVEATLKNEILKHQAYVSKNHEANEKDVSSNVSLEEEIVKMTSFTGEKVQVQRLHCMNARVPSTAIGIFSHGAKQSSPLQQLGRIGSMVQINSDLSTRKGLSNQIAKEIVAQDPSSTSELLSFRSLVDSEKTIKDVLGQSTILEWVRWERGGN.

The N-terminal 18 residues, 1-18 (MLFQRRLHFHQFFGKTRV), are a transit peptide targeting the mitochondrion.

This sequence belongs to the EF-Ts family.

Its subcellular location is the mitochondrion. Associates with the EF-Tu.GDP complex and induces the exchange of GDP to GTP. It remains bound to the aminoacyl-tRNA.EF-Tu.GTP complex up to the GTP hydrolysis stage on the ribosome. This Schizosaccharomyces pombe (strain 972 / ATCC 24843) (Fission yeast) protein is Elongation factor Ts, mitochondrial (tsf1).